The chain runs to 409 residues: Tyrosine--tRNA ligase (409 aa).

The 'HIGH' region motif lies at 54 to 63 (PTAPDIHLGH). The short motif at 238–242 (KMSKS) is the 'KMSKS' region element. Residue Lys-241 participates in ATP binding. The region spanning 347 to 407 (MGILHVLRAS…GKRKFARVNL (61 aa)) is the S4 RNA-binding domain.

The protein belongs to the class-I aminoacyl-tRNA synthetase family. TyrS type 2 subfamily. As to quaternary structure, homodimer.

It is found in the cytoplasm. It catalyses the reaction tRNA(Tyr) + L-tyrosine + ATP = L-tyrosyl-tRNA(Tyr) + AMP + diphosphate + H(+). Catalyzes the attachment of tyrosine to tRNA(Tyr) in a two-step reaction: tyrosine is first activated by ATP to form Tyr-AMP and then transferred to the acceptor end of tRNA(Tyr). The sequence is that of Tyrosine--tRNA ligase from Bordetella avium (strain 197N).